Here is a 506-residue protein sequence, read N- to C-terminus: MVMEGMGMAAAWAAGDLWVLAAAVVAGVVLVDAVVRRAHDWVRVAALGAERRSRLPPGEMGWPMVGSMWAFLRAFKSGNPDAFIASFIRRFGRTGVYRTFMFSSPTILAVTPEACKQVLMDDEGFVTGWPKATVTLIGPKSFVNMSYDDHRRIRKLTAAPINGFDALTTYLSFIDQTVVASLRRWSSPESGQVEFLTELRRMTFKIIVQIFMSGADDATMEALERSYTDLNYGMRAMAINLPGFAYYRALRARRKLVSVLQGVLDGRRAAAAKGFKRSGAMDMMDRLIEAEDERGRRLADDEIVDVLIMYLNAGHESSGHITMWATVFLQENPDIFARAKAEQEEIMRSIPATQNGLTLRDFKKMHFLSQVVDETLRCVNISFVSFRQATRDIFVNGYLIPKGWKVQLWYRSVHMDDQVYPDPKMFNPSRWEGPPPKAGTFLPFGLGARLCPGNDLAKLEISVFLHHFLLGYKLKRANPKCRVRYLPHPRPVDNCLATITKVSDEH.

The helical transmembrane segment at 11–31 (AWAAGDLWVLAAAVVAGVVLV) threads the bilayer. Residue C451 coordinates heme.

This sequence belongs to the cytochrome P450 family. The cofactor is heme. In terms of tissue distribution, expressed in roots and panicles. Expressed at low levels in vegetative shoot apices, leaf sheaths, leaf blades and stems.

The protein resides in the endoplasmic reticulum membrane. It catalyses the reaction ent-kaur-16-en-19-oate + 3 reduced [NADPH--hemoprotein reductase] + 3 O2 = gibberellin A12 + 3 oxidized [NADPH--hemoprotein reductase] + 4 H2O + 4 H(+). The enzyme catalyses ent-kaur-16-en-19-oate + reduced [NADPH--hemoprotein reductase] + O2 = ent-7alpha-hydroxykaur-16-en-19-oate + oxidized [NADPH--hemoprotein reductase] + H2O + H(+). It carries out the reaction ent-7alpha-hydroxykaur-16-en-19-oate + reduced [NADPH--hemoprotein reductase] + O2 = gibberellin A12 aldehyde + oxidized [NADPH--hemoprotein reductase] + 2 H2O + H(+). The catalysed reaction is gibberellin A12 aldehyde + reduced [NADPH--hemoprotein reductase] + O2 = gibberellin A12 + oxidized [NADPH--hemoprotein reductase] + H2O + 2 H(+). It functions in the pathway plant hormone biosynthesis; gibberellin biosynthesis. In terms of biological role, involved in gibberellin (GA) biosynthesis. Catalyzes three successive oxidations of ent-kaurenoic acid giving gibberellin 12 (GA12), a key step in GAs biosynthesis. GAs, which are involved many processes, including stem elongation, play a central role in plant development. Required for pollen germination and elongation. This Oryza sativa subsp. japonica (Rice) protein is Ent-kaurenoic acid oxidase.